A 600-amino-acid polypeptide reads, in one-letter code: Oligopeptide-binding protein OppA (600 aa).

The signal sequence occupies residues Met-1–Ala-22. Cys-23 is lipidated: N-palmitoyl cysteine. Residue Cys-23 is the site of S-diacylglycerol cysteine attachment.

This sequence belongs to the bacterial solute-binding protein 5 family. As to quaternary structure, the complex is composed of two ATP-binding proteins (OppD and OppF), two transmembrane proteins (OppB and OppC) and a solute-binding protein (OppA).

The protein localises to the cell membrane. Functionally, part of the ABC transporter complex OppABCDF involved in the uptake of oligopeptides. The protein is Oligopeptide-binding protein OppA of Lactococcus lactis subsp. cremoris (strain SK11).